The chain runs to 211 residues: Protein CHLORORESPIRATORY REDUCTION 41, chloroplastic (211 aa).

Residues 1-38 (MASTSTLLLPSLSSKNLHIAVPIRTNSFVRRTTKFSTK) constitute a chloroplast transit peptide. A coiled-coil region spans residues 136 to 163 (AKAGEIVAERAREEAEVLRDEGKVEERM).

Biogenesis factor component of the plastidial NDH subcomplex A.

It localises to the plastid. The protein localises to the chloroplast. The protein resides in the chloroplast stroma. Its function is as follows. Required for both formation and activity of the chloroplast NAD(P)H dehydrogenase (NDH) complex of the photosynthetic electron transport chain. Functions in assembly or stabilization of the NDH complex; probably involved, together with NdhO and NdhH, in the formation of an NDH subcomplex A assembly intermediate (NAI500). The protein is Protein CHLORORESPIRATORY REDUCTION 41, chloroplastic of Arabidopsis thaliana (Mouse-ear cress).